Here is a 264-residue protein sequence, read N- to C-terminus: Apolipoprotein A-I (264 aa).

Residues 1–18 (MKAVLLVVAALFLAGSQA) form the signal peptide. 2 consecutive repeat copies span residues 67–88 (LRLS…ADFG) and 89–110 (LATQ…QIVS). Residues 67-264 (LRLSDNWDTL…DQASKQLAAQ (198 aa)) form a 10 X approximate tandem repeats region. The stretch at 111–121 (EDLQDVKHKVQ) is one 3; half-length repeat. Repeat copies occupy residues 122–143 (PYLE…EKVR), 144–165 (PLGI…EKLT), and 166–187 (PLGE…TQLA). The 7; truncated repeat unit spans residues 188-207 (PFSEEMRQRLAKRLEELKDS). M193 is modified (methionine sulfoxide). Residues 208–229 (ATLADYHAKASEHLKMLGEKAK) form repeat 8. The stretch at 230–240 (PALEDLRQGLL) is one 9; half-length repeat. Repeat unit 10 spans residues 241-264 (PVLENLKASILSSIDQASKQLAAQ).

It belongs to the apolipoprotein A1/A4/E family. As to quaternary structure, homodimer. Interacts with APOA1BP and CLU. Component of a sperm activating protein complex (SPAP), consisting of APOA1, an immunoglobulin heavy chain, an immunoglobulin light chain and albumin. Interacts with NDRG1. Interacts with SCGB3A2. Interacts with NAXE and YJEFN3. Glycosylated. Post-translationally, palmitoylated. In terms of processing, phosphorylation sites are present in the extracellular medium.

The protein localises to the secreted. In terms of biological role, participates in the reverse transport of cholesterol from tissues to the liver for excretion by promoting cholesterol efflux from tissues and by acting as a cofactor for the lecithin cholesterol acyltransferase (LCAT). As part of the SPAP complex, activates spermatozoa motility. The polypeptide is Apolipoprotein A-I (APOA1) (Cavia aperea (Brazilian guinea pig)).